We begin with the raw amino-acid sequence, 297 residues long: Large ribosomal subunit protein uL10 (297 aa).

It belongs to the universal ribosomal protein uL10 family. Part of the 50S ribosomal subunit. Forms part of the ribosomal stalk which helps the ribosome interact with GTP-bound translation factors. Forms a heptameric L10(L12)2(L12)2(L12)2 complex, where L10 forms an elongated spine to which the L12 dimers bind in a sequential fashion.

Its function is as follows. Forms part of the ribosomal stalk, playing a central role in the interaction of the ribosome with GTP-bound translation factors. This chain is Large ribosomal subunit protein uL10, found in Methanococcus voltae.